The chain runs to 855 residues: MASKLSFKRMDSIAETMPDALRQSRYQMKRCFQRYVSKGKRLLKNQQLMEELEKSLDDKVEKEKLVEGFLGYIICSTQEAVVLPPFVAFAVRMNPGIWEYVKVHSDDLSVEGITPSEYLKFKETLYDEKWAKDDNSLEVDFGALDLSTPHLTLPSSIGNGLQFVSKFMSSKLGGKPESMKPLLDYLLTLNYRGEKLMINDTIDTVSKLQTALLLAEVFVSGLPKYTPYLKFEQRFQEWGLERGWGDTAERCKETLNCLSEVLQAPDPTNMEKFFSRVPSIFNIVIFSIHGYFGQEKVLGLPDTGGQVVYILDQVRAMEEELLQRIKQQGLHVTPKILVLTRLIPDAKGTKCNVELEPVENTKYSHILRVPFKTEDGKDLRQWVSRFDIYPYLERYAQDSCAKILDILEGKPDLIIGNYTDGNLVASLLSNKLCVTQGTIAHALEKTKYEDSDVKWREMDQKYHFSCQFTADMISMNTSDFIITSTYQEIAGSKEKPGQYEHHYAFTMPGLCRYATGINVFDPKFNIAAPGADQSIYFPFTQKQKRLTDLHPQIDELLYSKDDTDEHIGYLADRNKPIIFSMARLDKVKNITGLVEWYGQNKKLRDLVNLVVVAGLLDASQSKDREEIEEINKMHNLMDRYQLKGQIRWIKAQTDRVRNGELYRCIADTKGAFVQPALYEAFGLTVIEAMNCGLPTFATNQGGPAEIIIDGVSGFHVNPINDREAGIKIADFFQKCKEDPSYWNKVSTAGLQRICECYTWKIYATRVLNMGSTYSFWKTLNKEERQAKQRYLQIFYNVQYRNLAKAMARAGDQQARQTTTGVAPSEIVVRPKERKPQTRMQRILTRLAGQKPPVSE.

The tract at residues 279–758 (SIFNIVIFSI…GLQRICECYT (480 aa)) is GT-B glycosyltransferase.

The protein belongs to the glycosyltransferase 1 family. Plant sucrose synthase subfamily. Predominantly expressed in roots, flowers and immature seeds.

It localises to the cytoplasm. The protein localises to the membrane. The catalysed reaction is an NDP-alpha-D-glucose + D-fructose = a ribonucleoside 5'-diphosphate + sucrose + H(+). Functionally, sucrose-cleaving enzyme that provides UDP-glucose and fructose for various metabolic pathways. This is Sucrose synthase 5 (SUS5) from Oryza sativa subsp. japonica (Rice).